The following is a 275-amino-acid chain: Orotidine 5'-phosphate decarboxylase (275 aa).

Residue Lys-95 is the Proton donor of the active site.

Belongs to the OMP decarboxylase family. Type 2 subfamily.

The catalysed reaction is orotidine 5'-phosphate + H(+) = UMP + CO2. The protein operates within pyrimidine metabolism; UMP biosynthesis via de novo pathway; UMP from orotate: step 2/2. The polypeptide is Orotidine 5'-phosphate decarboxylase (Delftia acidovorans (strain DSM 14801 / SPH-1)).